The following is a 406-amino-acid chain: Peptidyl-alpha-hydroxyglycine alpha-amidating lyase 2 (406 aa).

The N-terminal stretch at 1-19 is a signal peptide; sequence MSRLLFVALLAISLGYVAS. NHL repeat units follow at residues 168–209, 218–261, 264–308, and 358–402; these read GAIK…FKPF, GKRF…FNAA, LLRT…PKAG, and DPRS…RVWK. 2 disulfide bridges follow: C231/C251 and C293/C304.

It belongs to the peptidyl-alpha-hydroxyglycine alpha-amidating lyase family. Zn(2+) serves as cofactor. In terms of processing, N-glycosylated. In terms of tissue distribution, only found in a subset of neurons distributed throughout all levels of the central nervous system (CNS). Present in at least some neuroendocrine cells. In adult brains, it is only present in a small handful of cells, the majority of which being distributed in distal parts of the medulla, with a higher expression in the posterior surface of the brain (at protein level).

It is found in the secreted. It catalyses the reaction a [peptide]-C-terminal (2S)-2-hydroxyglycine = a [peptide]-C-terminal amide + glyoxylate. In terms of biological role, peptidyl-alpha-hydroxylglycine alpha-amidating lyase that catalyzes an essential reaction in C-terminal alpha-amidation of peptides. Mediates the dismutation of the unstable peptidyl(2-hydroxyglycine) intermediate to glyoxylate and the corresponding desglycine peptide amide. C-terminal amidation of peptides such as neuropeptides is essential for full biological activity. This chain is Peptidyl-alpha-hydroxyglycine alpha-amidating lyase 2 (Pal2), found in Drosophila melanogaster (Fruit fly).